A 355-amino-acid polypeptide reads, in one-letter code: Protein RecA (355 aa).

65-72 (GPESSGKT) lines the ATP pocket.

This sequence belongs to the RecA family.

The protein resides in the cytoplasm. Its function is as follows. Can catalyze the hydrolysis of ATP in the presence of single-stranded DNA, the ATP-dependent uptake of single-stranded DNA by duplex DNA, and the ATP-dependent hybridization of homologous single-stranded DNAs. It interacts with LexA causing its activation and leading to its autocatalytic cleavage. This chain is Protein RecA, found in Pseudomonas putida (strain W619).